Reading from the N-terminus, the 94-residue chain is Acylphosphatase (94 aa).

One can recognise an Acylphosphatase-like domain in the interval 8-94; sequence RFTARVVGRV…QGDLADFRRK (87 aa). Catalysis depends on residues arginine 23 and asparagine 41.

It belongs to the acylphosphatase family.

The enzyme catalyses an acyl phosphate + H2O = a carboxylate + phosphate + H(+). This Frankia alni (strain DSM 45986 / CECT 9034 / ACN14a) protein is Acylphosphatase (acyP).